Here is a 355-residue protein sequence, read N- to C-terminus: MNATITTSEQARPVFPFTAIVGQEEMKLALLLNVIDPKIGGVMIMGDRGTGKSTTVRALVDLLPEIEVVENDPFNSHPYDPELMSDEVREKVHRGESIRTTTTKIPMVDLPLGATEDRVCGTIDIEKALTEGVKAFEPGLLAKANRGILYVDEVNLLDDHLVDVLLDSAASGWNTVEREGISICHPARFILVGSGNPEEGELRPQLLDRFGMHAQIGTVREPELRVKIVEQRATFDENPKEFRQSYETSQASLTSQLTEARARLRQVQTDYSLRVKISQVCSELNVDGLRGDIVTNRAAKALAALEGRTSVSVEDIGRIITLCLRHRLRKDPLESIDSGEKVQEVFSIVFGTNPL.

Position 46–53 (46–53 (GDRGTGKS)) interacts with ATP. Cysteine 281 and cysteine 323 are disulfide-bonded.

The protein belongs to the Mg-chelatase subunits D/I family. The magnesium chelatase complex is a heterotrimer consisting of subunits CHLI, CHLD and CHLH.

It localises to the plastid. The protein localises to the chloroplast. It carries out the reaction protoporphyrin IX + Mg(2+) + ATP + H2O = Mg-protoporphyrin IX + ADP + phosphate + 3 H(+). It functions in the pathway porphyrin-containing compound metabolism; chlorophyll biosynthesis. Redox regulation; active in reducing conditions, inactive in oxidizing conditions. Thioredoxins f and m mediate the reversible reductive activation of oxidized CHLI. Functionally, involved in chlorophyll biosynthesis. Catalyzes the insertion of magnesium ion into protoporphyrin IX to yield Mg-protoporphyrin IX. The magnesium-chelatase is a complex of three subunits, CHLI, CHLD and CHLH. The reaction takes place in two steps, with an ATP-dependent activation followed by an ATP-dependent chelation step. This chain is Magnesium-chelatase subunit ChlI (chlI), found in Nephroselmis olivacea (Green alga).